We begin with the raw amino-acid sequence, 267 residues long: Imidazole glycerol phosphate synthase subunit HisF (267 aa).

Catalysis depends on residues D22 and D141.

Belongs to the HisA/HisF family. Heterodimer of HisH and HisF.

It localises to the cytoplasm. The catalysed reaction is 5-[(5-phospho-1-deoxy-D-ribulos-1-ylimino)methylamino]-1-(5-phospho-beta-D-ribosyl)imidazole-4-carboxamide + L-glutamine = D-erythro-1-(imidazol-4-yl)glycerol 3-phosphate + 5-amino-1-(5-phospho-beta-D-ribosyl)imidazole-4-carboxamide + L-glutamate + H(+). It functions in the pathway amino-acid biosynthesis; L-histidine biosynthesis; L-histidine from 5-phospho-alpha-D-ribose 1-diphosphate: step 5/9. Its function is as follows. IGPS catalyzes the conversion of PRFAR and glutamine to IGP, AICAR and glutamate. The HisF subunit catalyzes the cyclization activity that produces IGP and AICAR from PRFAR using the ammonia provided by the HisH subunit. The sequence is that of Imidazole glycerol phosphate synthase subunit HisF from Mycobacterium bovis (strain ATCC BAA-935 / AF2122/97).